The sequence spans 295 residues: Virginiamycin B lyase (295 aa).

His227 lines the substrate pocket. Residue Glu267 participates in Mg(2+) binding. Catalysis depends on His269, which acts as the Proton acceptor. Glu284 provides a ligand contact to Mg(2+).

This sequence belongs to the Vgb family. As to quaternary structure, monomer. Mg(2+) serves as cofactor.

Functionally, inactivates the type B streptogramin antibiotics by linearizing the lactone ring at the ester linkage, generating a free phenylglycine carboxylate and converting the threonyl moiety into 2-amino-butenoic acid. In Bacillus licheniformis (strain ATCC 14580 / DSM 13 / JCM 2505 / CCUG 7422 / NBRC 12200 / NCIMB 9375 / NCTC 10341 / NRRL NRS-1264 / Gibson 46), this protein is Virginiamycin B lyase.